Reading from the N-terminus, the 205-residue chain is Protease (205 aa).

Active-site residues include His-54, Asp-71, and Cys-120.

This sequence belongs to the peptidase C5 family. In terms of assembly, interacts with protease cofactor pVI-C; this interaction is necessary for protease activation.

Its subcellular location is the virion. It is found in the host nucleus. It catalyses the reaction Cleaves proteins of the adenovirus and its host cell at two consensus sites: -Yaa-Xaa-Gly-Gly-|-Xaa- and -Yaa-Xaa-Gly-Xaa-|-Gly- (in which Yaa is Met, Ile or Leu, and Xaa is any amino acid).. With respect to regulation, requires DNA and protease cofactor for maximal activation. Inside nascent virions, becomes partially activated by binding to the viral DNA, allowing it to cleave the cofactor that binds to the protease and fully activates it. Actin, like the viral protease cofactor, seems to act as a cofactor in the cleavage of cytokeratin 18 and of actin itself. In terms of biological role, cleaves viral precursor proteins (pTP, pIIIa, pVI, pVII, pVIII, and pX) inside newly assembled particles giving rise to mature virions. Protease complexed to its cofactor slides along the viral DNA to specifically locate and cleave the viral precursors. Mature virions have a weakened organization compared to the unmature virions, thereby facilitating subsequent uncoating. Without maturation, the particle lacks infectivity and is unable to uncoat. Late in adenovirus infection, in the cytoplasm, may participate in the cytoskeleton destruction. Cleaves host cell cytoskeletal keratins K7 and K18. The polypeptide is Protease (Bos taurus (Bovine)).